A 313-amino-acid polypeptide reads, in one-letter code: Porphobilinogen deaminase (313 aa).

Position 242 is an S-(dipyrrolylmethanemethyl)cysteine (cysteine 242).

The protein belongs to the HMBS family. As to quaternary structure, monomer. Requires dipyrromethane as cofactor.

It carries out the reaction 4 porphobilinogen + H2O = hydroxymethylbilane + 4 NH4(+). Its pathway is porphyrin-containing compound metabolism; protoporphyrin-IX biosynthesis; coproporphyrinogen-III from 5-aminolevulinate: step 2/4. In terms of biological role, tetrapolymerization of the monopyrrole PBG into the hydroxymethylbilane pre-uroporphyrinogen in several discrete steps. In Pseudomonas putida (strain ATCC 47054 / DSM 6125 / CFBP 8728 / NCIMB 11950 / KT2440), this protein is Porphobilinogen deaminase.